Here is an 867-residue protein sequence, read N- to C-terminus: cGMP-dependent 3',5'-cGMP phosphodiesterase A (867 aa).

Residues 121–146 show a composition bias toward low complexity; the sequence is IINSSSSTTDTSKTSPIKKQTSSSSP. Disordered regions lie at residues 121–167 and 180–241; these read IINS…SQQQ and HHHH…STFP. Residues 147-160 show a composition bias toward pro residues; sequence PLSPQQQQPPPPLV. Positions 191–220 are enriched in low complexity; that stretch reads NDNNNNTTTNNNNIEILEQQQQQQQQQQQQ. The span at 221–232 shows a compositional bias: acidic residues; the sequence is QDEDSTDVDEEF. The interval 357–503 is phosphodiesterase activity; it reads STTGFVLWIN…GDTCYDPNRI (147 aa). Positions 399, 401, and 403 each coordinate a divalent metal cation. A nucleoside 3',5'-cyclic phosphate-binding positions include 607-721 and 734-851; these read IFRS…WEMR and VFSR…IFVD.

It belongs to the metallo-beta-lactamase superfamily. cNMP phosphodiesterase family. Mn(2+) serves as cofactor. Mg(2+) is required as a cofactor. Requires Zn(2+) as cofactor.

It localises to the cytoplasm. The protein resides in the cytosol. It carries out the reaction 3',5'-cyclic GMP + H2O = GMP + H(+). Its function is as follows. Phosphodiesterase specific for cGMP, which is activated by cGMP but not by cAMP. Involved in the degradation of intracellular cGMP, contributes to the control of cGMP signals. The polypeptide is cGMP-dependent 3',5'-cGMP phosphodiesterase A (pdeD) (Dictyostelium discoideum (Social amoeba)).